Consider the following 913-residue polypeptide: MDTASISSTSSNSKSSKEQIKYTFTDFDNDIKNEINELYSYSELSILKKSNISNQFYHDLHEYTSKNKWRDLTDIEKIDYLQHLIGFFELSMKGQDNYNRYLLKSRFIWYIAQGVRDETHDRKDQLHQSKLNCILLREINALPIILKTLVLSSQISNETLRNQQQQQQQQQQQQQQQQQQQQQQNENEGSGEGGTNFTTTTTTTTTTTTANTFISHGKRNNIIKNNSGSVSGVIKNINSNGTLSSSMKVNVKRADLLMSILLDIIYLIIINNKDDELFKEEIFESLEGCNNNNNNNNNYNNNILGKNNNNGTNCDNPNLISIILQLLSEFNEIDGNLYPIKKILMVLWKSLTIFMGGLEDLDRLKQERLDNVGYKKGTPKTRSYDISNFIKSTQRYHSQLKSNSVLHKVNTHYLGTPKEYKDVDVFRLPLSLSDSLSVLQTNLYPPEKVRKEIGINYYSFNNNDTITPHTQSDYFYNTSNISSSKKQIKPRILIDNPSNFERFYCMNVSNFSKIVIILLKILLAATPVVKNYTGPINLIAEIVIDQSSPGSSASLVETMQSAIDFLRHKEIISKSTLGILLLIIKHSKFNQHLQFEYLSKIMYESNALVLLYKCLNHESVEKYLFSQNYLNSEEYFNEESLPSSSAASPPPPPIFQPLNCSGSSINSISSGGAGCEGGGANPPPVQLFENYKNLFSTITSLKLIQKVMKHHPSRISSLSASKSANILKKYCSINHPMIRLYSLKVIKNLVPYQTKKWKQINMRIISDIYLEVPIHINDNWLFSHNSAINNNNNNSNNNNNNNNNNSTNNDNGLTDEHEVTLQEKVEEYHRVNYEQWYTNDGLDMCYKNDHSMGIGIFDDLLNSLQLTTEEKQAIENDRLAYIDKDEGSSLIFMNDALEDELLFNKWNIQKPKF.

Composition is skewed to low complexity over residues Q177–E188, T195–T204, and N791–N811. Disordered stretches follow at residues Q177–T204 and N791–T814.

The protein belongs to the STRIP family.

This is Striatin-interacting protein homolog (fam40) from Dictyostelium discoideum (Social amoeba).